The following is a 213-amino-acid chain: dITP/XTP pyrophosphatase (213 aa).

7–12 (TSNLDK) lines the substrate pocket. Asp74 acts as the Proton acceptor in catalysis. Asp74 serves as a coordination point for Mg(2+). Residues Ser75, 165-168 (FGYD), Lys188, and 193-194 (HR) contribute to the substrate site.

This sequence belongs to the HAM1 NTPase family. In terms of assembly, homodimer. Mg(2+) serves as cofactor.

It catalyses the reaction XTP + H2O = XMP + diphosphate + H(+). The catalysed reaction is dITP + H2O = dIMP + diphosphate + H(+). It carries out the reaction ITP + H2O = IMP + diphosphate + H(+). Functionally, pyrophosphatase that catalyzes the hydrolysis of nucleoside triphosphates to their monophosphate derivatives, with a high preference for the non-canonical purine nucleotides XTP (xanthosine triphosphate), dITP (deoxyinosine triphosphate) and ITP. Seems to function as a house-cleaning enzyme that removes non-canonical purine nucleotides from the nucleotide pool, thus preventing their incorporation into DNA/RNA and avoiding chromosomal lesions. This chain is dITP/XTP pyrophosphatase, found in Campylobacter concisus (strain 13826).